Consider the following 337-residue polypeptide: Phosphatidate cytidylyltransferase, mitochondrial (337 aa).

Belongs to the TAM41 family. Requires Mg(2+) as cofactor. Brain and liver.

The protein localises to the mitochondrion inner membrane. It catalyses the reaction a 1,2-diacyl-sn-glycero-3-phosphate + CTP + H(+) = a CDP-1,2-diacyl-sn-glycerol + diphosphate. It functions in the pathway phospholipid metabolism; CDP-diacylglycerol biosynthesis; CDP-diacylglycerol from sn-glycerol 3-phosphate: step 3/3. In terms of biological role, catalyzes the conversion of phosphatidic acid (PA) to CDP-diacylglycerol (CDP-DAG), an essential intermediate in the synthesis of phosphatidylglycerol, cardiolipin and phosphatidylinositol. This chain is Phosphatidate cytidylyltransferase, mitochondrial (Tamm41), found in Rattus norvegicus (Rat).